The sequence spans 385 residues: tRNA-specific 2-thiouridylase MnmA (385 aa).

ATP is bound by residues 29–36 (GLSGGVDS) and Leu55. The active-site Nucleophile is the Cys116. Cys116 and Cys225 are joined by a disulfide. An ATP-binding site is contributed by Gly141. An interaction with tRNA region spans residues 175–177 (KDQ). Catalysis depends on Cys225, which acts as the Cysteine persulfide intermediate. The interaction with tRNA stretch occupies residues 330 to 331 (RY).

It belongs to the MnmA/TRMU family.

The protein resides in the cytoplasm. It carries out the reaction S-sulfanyl-L-cysteinyl-[protein] + uridine(34) in tRNA + AH2 + ATP = 2-thiouridine(34) in tRNA + L-cysteinyl-[protein] + A + AMP + diphosphate + H(+). Catalyzes the 2-thiolation of uridine at the wobble position (U34) of tRNA, leading to the formation of s(2)U34. This Prochlorococcus marinus (strain AS9601) protein is tRNA-specific 2-thiouridylase MnmA.